Reading from the N-terminus, the 437-residue chain is Putative metabolite transport protein NicT (437 aa).

12 consecutive transmembrane segments (helical) span residues 28–48 (LIPF…NVGF), 66–86 (LGAG…NLIL), 93–113 (LWIA…MFVT), 123–143 (FLLG…LTMW), 152–172 (IIAL…PISG), 189–209 (WLFL…FWAL), 254–274 (VWML…MGFW), 290–310 (IGLL…MIGA), 320–340 (WHII…TLFS), 347–367 (VVLF…FFSL), 374–394 (GTAA…AGLV), and 411–431 (AALW…IALP).

The protein belongs to the major facilitator superfamily.

Its subcellular location is the membrane. Functionally, probable transporter, possibly involved in the aerobic nicotinate degradation pathway. In Pseudomonas putida (strain ATCC 47054 / DSM 6125 / CFBP 8728 / NCIMB 11950 / KT2440), this protein is Putative metabolite transport protein NicT (nicT).